Reading from the N-terminus, the 402-residue chain is Pyruvate synthase subunit PorA (402 aa).

In terms of assembly, heterotetramer of one alpha, one beta, one delta and one gamma chain.

It catalyses the reaction 2 oxidized [2Fe-2S]-[ferredoxin] + pyruvate + CoA = 2 reduced [2Fe-2S]-[ferredoxin] + acetyl-CoA + CO2 + H(+). This chain is Pyruvate synthase subunit PorA (porA), found in Methanosarcina barkeri (strain Fusaro / DSM 804).